The following is a 336-amino-acid chain: HTH-type transcriptional repressor PurR (336 aa).

The region spanning 2–56 (ATIKDVAKLAGVSTTTVSHVINKTRFVAEDTSKAVWDAIQQLNYSPSAVARSLKV) is the HTH lacI-type domain. The H-T-H motif DNA-binding region spans 4–23 (IKDVAKLAGVSTTTVSHVIN). The DNA-binding element occupies 48–56 (SAVARSLKV). 4 residues coordinate hypoxanthine: Tyr73, Lys188, Phe219, and Asp273.

As to quaternary structure, homodimer.

Its pathway is purine metabolism; purine nucleotide biosynthesis [regulation]. Is the main repressor of the genes involved in the de novo synthesis of purine nucleotides, regulating purB, purC, purEK, purF, purHD, purL, purMN and guaBA expression. PurR is allosterically activated to bind its cognate DNA by binding the purine corepressors, hypoxanthine or guanine, thereby effecting transcription repression. The chain is HTH-type transcriptional repressor PurR from Actinobacillus pleuropneumoniae serotype 3 (strain JL03).